The primary structure comprises 163 residues: Bacterial microcompartment assembly protein PduM (163 aa).

This sequence belongs to the PduM family. Interacts with shell protein PduK.

The protein localises to the bacterial microcompartment. It participates in polyol metabolism; 1,2-propanediol degradation. Its function is as follows. Plays an essential role in assembly and/or stability of the bacterial microcompartment (BMC) dedicated to 1,2-propanediol (1,2-PD) degradation. Expression of a cosmid containing the full 21-gene pdu operon in E.coli allows E.coli to grow on 1,2-propanediol (1,2-PD) with the appearance of bacterial microcompartments (BMC) in its cytoplasm. In terms of biological role, the 1,2-PD-specific bacterial microcompartment (BMC) concentrates low levels of 1,2-PD catabolic enzymes, concentrates volatile reaction intermediates thus enhancing pathway flux and keeps the level of toxic, mutagenic propionaldehyde low. The sequence is that of Bacterial microcompartment assembly protein PduM from Citrobacter freundii.